The sequence spans 316 residues: Probable 5-dehydro-4-deoxyglucarate dehydratase 1 (316 aa).

This sequence belongs to the DapA family.

The enzyme catalyses 5-dehydro-4-deoxy-D-glucarate + H(+) = 2,5-dioxopentanoate + CO2 + H2O. The protein operates within carbohydrate acid metabolism; D-glucarate degradation; 2,5-dioxopentanoate from D-glucarate: step 2/2. This is Probable 5-dehydro-4-deoxyglucarate dehydratase 1 from Streptomyces coelicolor (strain ATCC BAA-471 / A3(2) / M145).